The following is a 255-amino-acid chain: MNMNKIALVYNENSKSSSSIEEIKKLYTYCDVEDADVIMVAGGDGELLHNIHRYMHLNIPFYGVNLGSLGFLMNPLDIKNILQNIQESTASTLNPLLMQAEDVDGQIHKALAINEVSIFRKTNQAAKFRIEVNGVERMSELVADGALVATPAGSSAYNLSAGGHILPLESNMLCLTPICSFRPRRWHGALLPSSASIKFEILNTNKRPVNATADFQEFSNIKSVTIKSTNDKSIKLLFNKNHTLEDRIIKEQFGG.

Asp-44 serves as the catalytic Proton acceptor. Residues 44–45, His-49, 114–115, Asp-144, Ala-152, 155–160, and Gln-216 contribute to the NAD(+) site; these read DG, NE, and SAYNLS.

Belongs to the NAD kinase family. A divalent metal cation is required as a cofactor.

Its subcellular location is the cytoplasm. It carries out the reaction NAD(+) + ATP = ADP + NADP(+) + H(+). In terms of biological role, involved in the regulation of the intracellular balance of NAD and NADP, and is a key enzyme in the biosynthesis of NADP. Catalyzes specifically the phosphorylation on 2'-hydroxyl of the adenosine moiety of NAD to yield NADP. This Rickettsia bellii (strain OSU 85-389) protein is NAD kinase.